The sequence spans 452 residues: tRNA modification GTPase MnmE (452 aa).

(6S)-5-formyl-5,6,7,8-tetrahydrofolate contacts are provided by Arg-25, Glu-81, and Lys-120. One can recognise a TrmE-type G domain in the interval 216–375 (GITVVIAGEP…LKNHLKNTAG (160 aa)). Asn-226 is a binding site for K(+). GTP is bound by residues 226–231 (NVGKSS), 245–251 (TDIAGTT), and 270–273 (DTAG). Position 230 (Ser-230) interacts with Mg(2+). Positions 245, 247, and 250 each coordinate K(+). Thr-251 provides a ligand contact to Mg(2+). Residue Lys-452 participates in (6S)-5-formyl-5,6,7,8-tetrahydrofolate binding.

The protein belongs to the TRAFAC class TrmE-Era-EngA-EngB-Septin-like GTPase superfamily. TrmE GTPase family. As to quaternary structure, homodimer. Heterotetramer of two MnmE and two MnmG subunits. K(+) serves as cofactor.

It is found in the cytoplasm. Exhibits a very high intrinsic GTPase hydrolysis rate. Involved in the addition of a carboxymethylaminomethyl (cmnm) group at the wobble position (U34) of certain tRNAs, forming tRNA-cmnm(5)s(2)U34. The sequence is that of tRNA modification GTPase MnmE from Coxiella burnetii (strain Dugway 5J108-111).